The primary structure comprises 121 residues: Peptidyl-tRNA hydrolase (121 aa).

Belongs to the PTH2 family.

The protein resides in the cytoplasm. The catalysed reaction is an N-acyl-L-alpha-aminoacyl-tRNA + H2O = an N-acyl-L-amino acid + a tRNA + H(+). The natural substrate for this enzyme may be peptidyl-tRNAs which drop off the ribosome during protein synthesis. The sequence is that of Peptidyl-tRNA hydrolase from Sulfurisphaera tokodaii (strain DSM 16993 / JCM 10545 / NBRC 100140 / 7) (Sulfolobus tokodaii).